Consider the following 334-residue polypeptide: Lipoyl synthase (334 aa).

Positions 1-36 are disordered; it reads MSDALIAPNASSSEAPQSPAEHYDPTRKQKSADKTA. A compositionally biased stretch (low complexity) spans 7–20; sequence APNASSSEAPQSPA. Residues 21-36 are compositionally biased toward basic and acidic residues; that stretch reads EHYDPTRKQKSADKTA. Residues Cys81, Cys86, Cys92, Cys107, Cys111, Cys114, and Ser321 each contribute to the [4Fe-4S] cluster site. Residues 92 to 310 enclose the Radical SAM core domain; that stretch reads CFGKGTATFM…EEEAYKMGFT (219 aa).

This sequence belongs to the radical SAM superfamily. Lipoyl synthase family. It depends on [4Fe-4S] cluster as a cofactor.

It localises to the cytoplasm. The catalysed reaction is [[Fe-S] cluster scaffold protein carrying a second [4Fe-4S](2+) cluster] + N(6)-octanoyl-L-lysyl-[protein] + 2 oxidized [2Fe-2S]-[ferredoxin] + 2 S-adenosyl-L-methionine + 4 H(+) = [[Fe-S] cluster scaffold protein] + N(6)-[(R)-dihydrolipoyl]-L-lysyl-[protein] + 4 Fe(3+) + 2 hydrogen sulfide + 2 5'-deoxyadenosine + 2 L-methionine + 2 reduced [2Fe-2S]-[ferredoxin]. The protein operates within protein modification; protein lipoylation via endogenous pathway; protein N(6)-(lipoyl)lysine from octanoyl-[acyl-carrier-protein]: step 2/2. Its function is as follows. Catalyzes the radical-mediated insertion of two sulfur atoms into the C-6 and C-8 positions of the octanoyl moiety bound to the lipoyl domains of lipoate-dependent enzymes, thereby converting the octanoylated domains into lipoylated derivatives. This is Lipoyl synthase from Cupriavidus taiwanensis (strain DSM 17343 / BCRC 17206 / CCUG 44338 / CIP 107171 / LMG 19424 / R1) (Ralstonia taiwanensis (strain LMG 19424)).